A 413-amino-acid polypeptide reads, in one-letter code: MASSASDGTHERSAFRLSPPVLSGAMGPFMHTGLYVAQSWRDYLGQQPDKLPIARPTIALAAQAFRDEIVLLGLKARRPVSNHRVFERISQEVAAGLEFYGNRGWLEKPSGFFAQPPPLTEVAVRKVKDRRRSFYRIFFDSGFTPHPGEPGSQRWLSYTANNREYALLLRHPEPRPWLVCVHGTEMGRAPLDLAVFRAWKLHDELGLNIVMPVLPMHGPRGQGLPKGAVFPGEDVLDDVHGTAQAVWDIRRLLSWIRSQEEESLIGLNGLSLGGYIASLVASLEEGLACAILGVPVADLIELLGRHCGLRHKDPRRHTVKMAEPIGRMISPLSLTPLVPMPGRFIYAGIADRLVHPREQVTRLWEHWGKPEIVWYPGGHTGFFQSRPVRRFVQAALEQSGLLDAPRTQRDRSA.

This is an uncharacterized protein from Mycobacterium tuberculosis (strain CDC 1551 / Oshkosh).